The following is a 155-amino-acid chain: Small ribosomal subunit protein uS17 (155 aa).

Residue Ala2 is modified to N-acetylalanine.

The protein belongs to the universal ribosomal protein uS17 family.

The sequence is that of Small ribosomal subunit protein uS17 from Drosophila yakuba (Fruit fly).